The primary structure comprises 376 residues: 26S proteasome non-ATPase regulatory subunit 13 (376 aa).

Residues 171–338 (SYYKDALRFL…KRVHMTWVQP (168 aa)) form the PCI domain.

As to quaternary structure, component of the 19S proteasome regulatory particle complex. The 26S proteasome consists of a 20S core particle (CP) and two 19S regulatory subunits (RP). The regulatory particle is made of a lid composed of 9 subunits including PSMD13, a base containing 6 ATPases and few additional components.

Component of the 26S proteasome, a multiprotein complex involved in the ATP-dependent degradation of ubiquitinated proteins. This complex plays a key role in the maintenance of protein homeostasis by removing misfolded or damaged proteins, which could impair cellular functions, and by removing proteins whose functions are no longer required. Therefore, the proteasome participates in numerous cellular processes, including cell cycle progression, apoptosis, or DNA damage repair. This is 26S proteasome non-ATPase regulatory subunit 13 from Gallus gallus (Chicken).